Reading from the N-terminus, the 145-residue chain is MAKEVAGQIKLQIKGGAANPSPPVGPALGAKGINIMEFCKQFNARTQDKAGKVLPVVITYYADKSFDFIVKTPPVAIQLLEASKQKSGSAEPNRKKVAEITWEQVRTIAEDKLVDLNCFDIKAAMKMVAGTARSMGIAIKGDFPE.

It belongs to the universal ribosomal protein uL11 family. In terms of assembly, part of the ribosomal stalk of the 50S ribosomal subunit. Interacts with L10 and the large rRNA to form the base of the stalk. L10 forms an elongated spine to which L12 dimers bind in a sequential fashion forming a multimeric L10(L12)X complex. One or more lysine residues are methylated.

In terms of biological role, forms part of the ribosomal stalk which helps the ribosome interact with GTP-bound translation factors. In Porphyromonas gingivalis (strain ATCC 33277 / DSM 20709 / CIP 103683 / JCM 12257 / NCTC 11834 / 2561), this protein is Large ribosomal subunit protein uL11.